The sequence spans 432 residues: uncharacterized protein (432 aa).

This sequence to M.jannaschii MJ0977.

This is an uncharacterized protein from Methanocaldococcus jannaschii (strain ATCC 43067 / DSM 2661 / JAL-1 / JCM 10045 / NBRC 100440) (Methanococcus jannaschii).